Consider the following 86-residue polypeptide: Probable protein BRICK1 (86 aa).

Residues 47–81 (EATTKSKLASLNEKLDILERKLEVLEVQVSSATTN) are a coiled coil.

Belongs to the BRK1 family. Binds SCAR.

It is found in the cytoplasm. It localises to the cytoskeleton. Its function is as follows. Involved in regulation of actin and microtubule organization. Part of a WAVE complex that activates the Arp2/3 complex. This Oryza sativa subsp. japonica (Rice) protein is Probable protein BRICK1.